A 717-amino-acid chain; its full sequence is MTKLAQWMFEQYVKDLNLKNRGSPSFRKWLTLQPSLLRYSGVMRANAFDILKYGYPMQQSGYTVATLEIHFKNIRSSFANIYWNRDSEEPEYVCCCATYQSHDGEYRYRFVWYQPFIEAYNAIETALDSLETIILNLIAARDLDFVVHIFPYNKGHEDYLASTQLILKIFIATLLMDILRIKDNTLDVHLNSDYIIVMERLWPHIKDAIEQFFEAHKDLLGYLIAFRNGGNFAGSLRPSCGQKIVPLTIREALQINDINLAVWREVFIMQECSDLVINGIAPCFPIFNTWTYLQGINQIFFENTSLQEKFKKDFIARELSKEIIKGQKILNDIEFKKLSLHQIQYMESFLLMSDVAIMITTEYVGYTLQSLPGIISRSSYLSPIVKNILMDEDSFMSLLFDLCYGAYVLHKKENVIHADLHLNNMTYYHFNPTSFTDRNKPGKYTLKVNNPVIAFITGPKVETETYVFKHIDGFGCIIDFSRAIMGPNHAIKLERQYGLAFVNTFYRNQSEHILKVLRYYFPEMLTNRENEIQGVILSNFNFFFNSITAIDFYAIARNLRSMLSLDYLHTSEVKRNVEISQTFLDTCQFLEEKAVEFLFKNLHTVLSGKPVEKTAGDVLLPIVFKKFLYPNIPKNILRSFTVIDVYNYNNIKRYSGKAIQTFPPWAQTKEILTHAEGRTFEDIFPRGELVFKKAYAENNYLDKILQRIREQLANENL.

This sequence belongs to the asfivirus C717R family.

It localises to the virion. This is an uncharacterized protein from African swine fever virus (isolate Tick/Malawi/Lil 20-1/1983) (ASFV).